Reading from the N-terminus, the 148-residue chain is Transcriptional regulator MraZ (148 aa).

SpoVT-AbrB domains follow at residues 5-51 and 80-123; these read VSIL…PEPN and AETL…NAEE.

This sequence belongs to the MraZ family. Forms oligomers.

It is found in the cytoplasm. It localises to the nucleoid. This chain is Transcriptional regulator MraZ, found in Chromobacterium violaceum (strain ATCC 12472 / DSM 30191 / JCM 1249 / CCUG 213 / NBRC 12614 / NCIMB 9131 / NCTC 9757 / MK).